Reading from the N-terminus, the 722-residue chain is Probable carboxypeptidase X1 (722 aa).

A signal peptide spans 1–20; sequence MWGLLLAVTAFAPSVGLGLG. Residues 30 to 54 are disordered; it reads APGSTLAPHSSVAQPSTKANETSER. A compositionally biased stretch (polar residues) spans 36–49; sequence APHSSVAQPSTKAN. Residues N49, N200, N210, and N307 are each glycosylated (N-linked (GlcNAc...) asparagine). An F5/8 type C domain is found at 103–263; it reads PGCPPLGLES…PCLRAEILAC (161 aa). C105 and C263 are oxidised to a cystine. One can recognise a Peptidase M14 domain in the interval 287–610; the sequence is RHHNYKAMRK…DALLTYLEQV (324 aa). Zn(2+)-binding residues include H349 and E352. N-linked (GlcNAc...) asparagine glycosylation is present at N461. H487 is a binding site for Zn(2+). The Proton donor/acceptor role is filled by E580.

It belongs to the peptidase M14 family. Zn(2+) serves as cofactor. As to expression, strongly expressed in testis and spleen. Moderately expressed in salivary gland, brain, heart, lung, and kidney. Extremely low expression in liver and muscle. No expression in eye, adrenal, and white adipose tissues.

The protein localises to the secreted. Its function is as follows. May be involved in cell-cell interactions. No carboxypeptidase activity was found yet. This chain is Probable carboxypeptidase X1 (Cpxm1), found in Mus musculus (Mouse).